A 190-amino-acid chain; its full sequence is Small ribosomal subunit protein eS7A (190 aa).

N-acetylserine is present on Ser-2. Residues Lys-83, Lys-84, and Lys-124 each participate in a glycyl lysine isopeptide (Lys-Gly) (interchain with G-Cter in ubiquitin) cross-link.

This sequence belongs to the eukaryotic ribosomal protein eS7 family. As to quaternary structure, component of the small ribosomal subunit (SSU). Mature yeast ribosomes consist of a small (40S) and a large (60S) subunit. The 40S small subunit contains 1 molecule of ribosomal RNA (18S rRNA) and 33 different proteins (encoded by 57 genes). The large 60S subunit contains 3 rRNA molecules (25S, 5.8S and 5S rRNA) and 46 different proteins (encoded by 81 genes). Interacts with snoRNA U3. uS11 interacts with MPP10. Component of the ribosomal small subunit (SSU) processome composed of at least 40 protein subunits and snoRNA U3. In terms of processing, N-terminally acetylated by acetyltransferase NatA. Ubiquitinated at Lys-83 and Lys-84 in response to stalled ribosomes, leading to activation of the No-Go Decay (NGD) pathway: first monoubiquitinated by MOT2/NOT4, followed by formation by HEL2 of 'Lys-63'-linked polyubiquitin chains on monoubiquitin.

The protein resides in the cytoplasm. It is found in the nucleus. The protein localises to the nucleolus. Its function is as follows. Component of the ribosome, a large ribonucleoprotein complex responsible for the synthesis of proteins in the cell. The small ribosomal subunit (SSU) binds messenger RNAs (mRNAs) and translates the encoded message by selecting cognate aminoacyl-transfer RNA (tRNA) molecules. The large subunit (LSU) contains the ribosomal catalytic site termed the peptidyl transferase center (PTC), which catalyzes the formation of peptide bonds, thereby polymerizing the amino acids delivered by tRNAs into a polypeptide chain. The nascent polypeptides leave the ribosome through a tunnel in the LSU and interact with protein factors that function in enzymatic processing, targeting, and the membrane insertion of nascent chains at the exit of the ribosomal tunnel. eS7 is involved in nucleolar processing of pre-18S ribosomal RNA and ribosome assembly. This Saccharomyces cerevisiae (strain ATCC 204508 / S288c) (Baker's yeast) protein is Small ribosomal subunit protein eS7A.